Reading from the N-terminus, the 130-residue chain is Small ribosomal subunit protein uS9 (130 aa).

This sequence belongs to the universal ribosomal protein uS9 family.

The protein is Small ribosomal subunit protein uS9 of Desulfovibrio desulfuricans (strain ATCC 27774 / DSM 6949 / MB).